Reading from the N-terminus, the 207-residue chain is Large ribosomal subunit protein uL4 (207 aa).

The interval 48-86 is disordered; it reads THKVKNRSEVRGGGRKPWRQKGTGRARQGSIRSPQWRGG. The span at 60-71 shows a compositional bias: basic residues; sequence GGRKPWRQKGTG.

It belongs to the universal ribosomal protein uL4 family. Part of the 50S ribosomal subunit.

Its function is as follows. One of the primary rRNA binding proteins, this protein initially binds near the 5'-end of the 23S rRNA. It is important during the early stages of 50S assembly. It makes multiple contacts with different domains of the 23S rRNA in the assembled 50S subunit and ribosome. In terms of biological role, forms part of the polypeptide exit tunnel. The polypeptide is Large ribosomal subunit protein uL4 (Bacillus licheniformis (strain ATCC 14580 / DSM 13 / JCM 2505 / CCUG 7422 / NBRC 12200 / NCIMB 9375 / NCTC 10341 / NRRL NRS-1264 / Gibson 46)).